Reading from the N-terminus, the 806-residue chain is Zygotic DNA replication licensing factor mcm3 (806 aa).

The region spanning 295 to 502 (VFEQLSRSLA…HDREISDHVL (208 aa)) is the MCM domain. 345–352 (GDPSVAKS) serves as a coordination point for ATP. The short motif at 477 to 480 (SRFD) is the Arginine finger element. A disordered region spans residues 662 to 738 (KKRRRREGES…TDSSAKPGLS (77 aa)). Residues 693–702 (AQDGESHDPY) show a composition bias toward basic and acidic residues.

Belongs to the MCM family. Component of the mcm2-7 complex (RLF-M). The complex forms a toroidal hexameric ring with the proposed subunit order mcm2-mcm6-mcm4-mcm7-mcm3-mcm5. Begins to associate with zmcm6 into mcm complexes at the neurula stage. Component of the CMG helicase complex, composed of the mcm2-7 complex, the GINS complex and cdc45.

Its subcellular location is the nucleus. The protein resides in the chromosome. It carries out the reaction ATP + H2O = ADP + phosphate + H(+). Functionally, acts as a component of the mcm2-7 complex (mcm complex) which is the putative replicative helicase essential for 'once per cell cycle' DNA replication initiation and elongation in eukaryotic cells. The active ATPase sites in the mcm2-7 ring are formed through the interaction surfaces of two neighboring subunits such that a critical structure of a conserved arginine finger motif is provided in trans relative to the ATP-binding site of the Walker A box of the adjacent subunit. The six ATPase active sites, however, are likely to contribute differentially to the complex helicase activity. The existence of maternal and zygotic forms of mcm3 and mcm6 suggests that specific forms of mcm2-7 complexes may be used during different stages of development. In Xenopus laevis (African clawed frog), this protein is Zygotic DNA replication licensing factor mcm3.